The primary structure comprises 71 residues: Small ribosomal subunit protein bS18 (71 aa).

This sequence belongs to the bacterial ribosomal protein bS18 family. As to quaternary structure, part of the 30S ribosomal subunit. Forms a tight heterodimer with protein bS6.

In terms of biological role, binds as a heterodimer with protein bS6 to the central domain of the 16S rRNA, where it helps stabilize the platform of the 30S subunit. The chain is Small ribosomal subunit protein bS18 from Dichelobacter nodosus (strain VCS1703A).